The sequence spans 274 residues: Aliphatic sulfonates import ATP-binding protein SsuB 2 (274 aa).

The ABC transporter domain occupies 21-242 (LALRGVARRF…SRGSARLAAL (222 aa)). 53 to 60 (GRSGCGKS) serves as a coordination point for ATP.

This sequence belongs to the ABC transporter superfamily. Aliphatic sulfonates importer (TC 3.A.1.17.2) family. As to quaternary structure, the complex is composed of two ATP-binding proteins (SsuB), two transmembrane proteins (SsuC) and a solute-binding protein (SsuA).

It localises to the cell inner membrane. It carries out the reaction ATP + H2O + aliphatic sulfonate-[sulfonate-binding protein]Side 1 = ADP + phosphate + aliphatic sulfonateSide 2 + [sulfonate-binding protein]Side 1.. In terms of biological role, part of the ABC transporter complex SsuABC involved in aliphatic sulfonates import. Responsible for energy coupling to the transport system. In Pseudomonas aeruginosa (strain UCBPP-PA14), this protein is Aliphatic sulfonates import ATP-binding protein SsuB 2.